We begin with the raw amino-acid sequence, 240 residues long: ATP-dependent Clp protease proteolytic subunit 2 (240 aa).

The active-site Nucleophile is the Ser132. The active site involves His157.

It belongs to the peptidase S14 family. As to quaternary structure, fourteen ClpP subunits assemble into 2 heptameric rings which stack back to back to give a disk-like structure with a central cavity, resembling the structure of eukaryotic proteasomes.

It localises to the cytoplasm. It carries out the reaction Hydrolysis of proteins to small peptides in the presence of ATP and magnesium. alpha-casein is the usual test substrate. In the absence of ATP, only oligopeptides shorter than five residues are hydrolyzed (such as succinyl-Leu-Tyr-|-NHMec, and Leu-Tyr-Leu-|-Tyr-Trp, in which cleavage of the -Tyr-|-Leu- and -Tyr-|-Trp bonds also occurs).. Functionally, cleaves peptides in various proteins in a process that requires ATP hydrolysis. Has a chymotrypsin-like activity. Plays a major role in the degradation of misfolded proteins. This chain is ATP-dependent Clp protease proteolytic subunit 2, found in Synechococcus elongatus (strain ATCC 33912 / PCC 7942 / FACHB-805) (Anacystis nidulans R2).